Reading from the N-terminus, the 227-residue chain is Izumo sperm-egg fusion protein 4 (227 aa).

Residues Met-1–Ala-24 form the signal peptide. 2 N-linked (GlcNAc...) asparagine glycosylation sites follow: Asn-153 and Asn-214.

The protein belongs to the Izumo family.

The protein localises to the secreted. This chain is Izumo sperm-egg fusion protein 4 (Izumo4), found in Mus musculus (Mouse).